We begin with the raw amino-acid sequence, 257 residues long: Outer membrane protein YaiO (257 aa).

Residues Met1–Ala19 form the signal peptide.

It localises to the cell outer membrane. This chain is Outer membrane protein YaiO (yaiO), found in Escherichia coli (strain K12).